A 370-amino-acid chain; its full sequence is Chaperone protein DnaJ (370 aa).

A J domain is found at 4-68 (DYYQVLGVSK…QKRAAYDRFG (65 aa)). A CR-type zinc finger spans residues 133 to 211 (GIEKNISFSS…CHGMGRYHKQ (79 aa)). Cysteine 146, cysteine 149, cysteine 163, cysteine 166, cysteine 185, cysteine 188, cysteine 199, and cysteine 202 together coordinate Zn(2+). CXXCXGXG motif repeat units follow at residues 146-153 (CDACHGTG), 163-170 (CDSCGGVG), 185-192 (CHKCQGNG), and 199-206 (CKKCHGMG).

Belongs to the DnaJ family. Homodimer. Zn(2+) serves as cofactor.

Its subcellular location is the cytoplasm. Functionally, participates actively in the response to hyperosmotic and heat shock by preventing the aggregation of stress-denatured proteins and by disaggregating proteins, also in an autonomous, DnaK-independent fashion. Unfolded proteins bind initially to DnaJ; upon interaction with the DnaJ-bound protein, DnaK hydrolyzes its bound ATP, resulting in the formation of a stable complex. GrpE releases ADP from DnaK; ATP binding to DnaK triggers the release of the substrate protein, thus completing the reaction cycle. Several rounds of ATP-dependent interactions between DnaJ, DnaK and GrpE are required for fully efficient folding. Also involved, together with DnaK and GrpE, in the DNA replication of plasmids through activation of initiation proteins. This Rickettsia typhi (strain ATCC VR-144 / Wilmington) protein is Chaperone protein DnaJ.